A 388-amino-acid polypeptide reads, in one-letter code: LIM/homeobox protein Lhx9 (388 aa).

2 LIM zinc-binding domains span residues I69–G130 and I131–T193. Disordered regions lie at residues E239–T263, E321–L356, and S369–F388. The homeobox DNA-binding region spans H267–D326. Positions L344–L356 are enriched in low complexity. Over residues S376–F388 the composition is skewed to polar residues.

Interacts with LDB1 and LDB2.

The protein resides in the nucleus. Its function is as follows. Involved in gonadal development. This is LIM/homeobox protein Lhx9 (Lhx9) from Rattus norvegicus (Rat).